The sequence spans 506 residues: 5'-3' exonuclease PLD4 (506 aa).

The helical transmembrane segment at 31–51 (LQVLGALAVLWLGSVALICLL) threads the bilayer. Cysteines 94 and 250 form a disulfide. N-linked (GlcNAc...) asparagine glycosylation is found at Asn150 and Asn171. The PLD phosphodiesterase 1 domain maps to 209–236 (TRGVLHSKFWVVDGRHIYMGSANMDWRS). Catalysis depends on His214, which acts as the Proton donor. Active-site residues include Lys216 and Asp221. Asn249, Asn281, Asn403, Asn417, and Asn427 each carry an N-linked (GlcNAc...) asparagine glycan. Cysteines 379 and 502 form a disulfide. The region spanning 423–449 (FSRVNHSKFMVTEKAAYIGTSNWSEDY) is the PLD phosphodiesterase 2 domain. His428 functions as the Nucleophile in the catalytic mechanism. Residue Asn444 is glycosylated (N-linked (GlcNAc...) asparagine).

Belongs to the phospholipase D family. As to quaternary structure, homodimer. Post-translationally, highly N-glycosylated. Expressed in plasmacytoid dendritic cells and monocytes (at protein level).

It localises to the endoplasmic reticulum membrane. It is found in the golgi apparatus. The protein resides in the trans-Golgi network membrane. The protein localises to the nucleus. Its subcellular location is the early endosome. It localises to the cytoplasmic vesicle. It is found in the phagosome. The protein resides in the lysosome. The catalysed reaction is Exonucleolytic cleavage in the 5'- to 3'-direction to yield nucleoside 3'-phosphates.. It catalyses the reaction a 5'-end 5'-dephospho-ribonucleotidyl-ribonucleotide-RNA + H2O = a ribonucleoside 3'-phosphate + a 5'-end dephospho-ribonucleoside-RNA + H(+). It carries out the reaction a ribonucleoside 3'-phosphate-2'-3'-cyclophospho-GMP + H2O = a ribonucleoside 3'-phosphate + 2',3'-cyclophospho-GMP + H(+). The enzyme catalyses a 5'-end 5'-dephospho-2'-deoxyribonucleotidyl-2'-deoxyribonucleotide in single-stranded DNA + H2O = a 5'-end dephospho-2'-deoxyribonucleoside in single-stranded DNA + a 2'-deoxyribonucleoside 3'-phosphate + H(+). The catalysed reaction is a 5'-end 5'-phospho-2'-deoxyribonucleotide in single-stranded DNA + H2O = a 5'-end 5'-dephospho-2'-deoxyribonucleotide in single-stranded DNA + phosphate. It catalyses the reaction a 3-lyso-sn-glycero-1-phospho-(3'-acyl-1'-sn-glycerol) + a 1-acyl-sn-glycerol = a 3-acyl-sn-glycero-1-phospho-(3'-acyl-1'-sn-glycerol) + glycerol. It carries out the reaction 3-lyso-sn-glycero-1-phospho-(3'-(9Z-octadecenoyl)-1'-sn-glycerol) + 1-(9Z-octadecenoyl)-sn-glycerol = 3-(9Z-octadecenoyl)-sn-glycero-1-phospho-(3'-(9Z-octadecenoyl)-1'-sn-glycerol) + glycerol. The exonuclease activity toward ssDNA substrate is Ca(2+) and Mg(2+)-independent, but it is inhibited by Fe(2+), Cu(2+) and to a lesser extent Zn(2+) ions. In terms of biological role, 5'-&gt;3' exonuclease that hydrolyzes the phosphodiester bond of single-stranded DNA (ssDNA) and RNA molecules to form nucleoside 3'-monophosphates and 5'-end 5'-hydroxy deoxyribonucleotide/ribonucleotide fragments. Partially redundant with PLD3, can cleave all four nucleotides displaying higher efficiency for ssDNA and RNA fragments initiated with uridine and guanosine residues and lower efficiency for cytidine-initiated substrates. As a result, it does not always degrade polynucleotides to the single nucleotide level, it can stall at specific sites sparing certain fragments from exonucleolytic degradation. Processes self and pathogenic ssDNA and RNA molecules that reach the endolysosomal compartment via phagocytosis or autophagy and may serve as 'danger' signals for recognition by innate immune receptors such as toll-like receptors (TLRs). Degrades mitochondrial CpG-rich ssDNA fragments to prevent TLR9 activation and autoinflammatory response, but it can cleave viral RNA to generate ligands for TLR7 activation and initiate antiviral immune responses. In plasmacytoid dendritic cells, it cooperates with endonuclease RNASET2 to release 2',3'-cyclic guanosine monophosphate (2',3'-cGMP), a potent stimulatory ligand for TLR7. Produces 2',3'-cGMPs and cytidine-rich RNA fragments that occupy TLR7 ligand-binding pockets and trigger a signaling-competent state. Can exert polynucleotide phosphatase activity toward 5'-phosphorylated ssDNA substrates although at a slow rate. Transphosphatidylase that catalyzes the exchange with R to S stereo-inversion of the glycerol moiety between (S,R)-lysophosphatidylglycerol (LPG) and monoacylglycerol (MAG) substrates to yield (S,S)-bis(monoacylglycero)phosphate (BMP). Can synthesize a variety of (S,S)-BMPs representing the main phospholipid constituent of lysosomal intralumenal vesicle (ILV) membranes that bind acid hydrolases for lipid degradation. Regulates the homeostasis and interorganellar communication of the endolysosomal system with an overall impact on cellular removal of dysfunctional organelles via autophagy as well as proper protein and lipid turnover. May play a role in myotube formation in response to ER stress. The sequence is that of 5'-3' exonuclease PLD4 from Homo sapiens (Human).